We begin with the raw amino-acid sequence, 108 residues long: Small ribosomal subunit protein eS25y (108 aa).

The disordered stretch occupies residues methionine 1–lysine 36. The segment covering lysine 22 to glycine 31 has biased composition (basic residues).

Belongs to the eukaryotic ribosomal protein eS25 family.

The polypeptide is Small ribosomal subunit protein eS25y (RPS25B) (Arabidopsis thaliana (Mouse-ear cress)).